Consider the following 497-residue polypeptide: MKRPNFLFVMTDTQATNMVGCYSGKPLNTQNIDSLAAEGIRFNSAYTCSPVCTPARAGLFTGIYANQSGPWTNNVAPGKNISTMGRYFKDAGYHTCYIGKWHLDGHDYFGTGECPPEWDADYWFDGANYLSELTEKEISLWRNGLNSVEDLQANHIDETFTWAHRISNRAVDFLQQPARADEPFLMVVSYDEPHHPFTCPVEYLEKYADFYYELGEKAQDDLANKPEHHRLWAQAMPSPVGDDGLYHHPLYFACNDFVDDQIGRVINALTPEQRENTWVIYTSDHGEMMGAHKLISKGAAMYDDITRIPLIIRSPQGERRQVDTPVSHIDLLPTMMALADIEKPEILPGENILAVKEPRGVMVEFNRYEIEHDSFGGFIPVRCWVTDDFKLVLNLFTSDELYDRRNDPNEMHNLIDDIRFADVRSKMHDALLDYMDKIRDPFRSYQWSLRPWRKDARPRWMGAFRPRPQDGYSPVVRDYDTGLPTQGVKVEEKKQKF.

Residues aspartate 12, threonine 13, and cysteine 52 each contribute to the Ca(2+) site. The Nucleophile role is filled by cysteine 52. Cysteine 52 carries the post-translational modification 3-oxoalanine (Cys). The active site involves histidine 102. Residues aspartate 284 and histidine 285 each coordinate Ca(2+).

The protein belongs to the sulfatase family. Ca(2+) is required as a cofactor. Post-translationally, the conversion to 3-oxoalanine (also known as C-formylglycine, FGly), of a serine or cysteine residue in prokaryotes and of a cysteine residue in eukaryotes, is critical for catalytic activity.

This is an uncharacterized protein from Escherichia coli (strain K12).